A 333-amino-acid chain; its full sequence is MNIAVLGAGSWGTTLAVLLAKKGHDVRLWAHRPEFAATLDAERENRRYLKGVAFPDSLQITPHLQPLVSWSEMIVTAVPSQALRETILGFCTLDLSGKILVNVAKGIEIGTGKRMSEVLLEVLPGVCPSQVAALYGPSHAEEVSKGQPTTVVASSSSLATAEKVQEVFHTSMFRVYVNTDIVGVEIAGSVKNIIAIAAGISDGIGFGDNAKAAIITRGMAEISRLCSKLGGEAVTISGLAGIGDLVVTCLSRHSRNRYVGEEIGRGRSLDEVISQMNMIAEGVHSSRAVYELSRAVGVDMPITRAVYQMLFERKPVEQAILDLMTRDLKQERD.

Positions 10, 11, 31, 32, and 105 each coordinate NADPH. Sn-glycerol 3-phosphate-binding residues include K105, G136, and S138. A140 is a binding site for NADPH. 5 residues coordinate sn-glycerol 3-phosphate: K191, D244, S254, R255, and N256. The active-site Proton acceptor is the K191. R255 contacts NADPH. NADPH is bound by residues I279 and E281.

This sequence belongs to the NAD-dependent glycerol-3-phosphate dehydrogenase family.

The protein localises to the cytoplasm. It carries out the reaction sn-glycerol 3-phosphate + NAD(+) = dihydroxyacetone phosphate + NADH + H(+). The enzyme catalyses sn-glycerol 3-phosphate + NADP(+) = dihydroxyacetone phosphate + NADPH + H(+). It participates in membrane lipid metabolism; glycerophospholipid metabolism. Functionally, catalyzes the reduction of the glycolytic intermediate dihydroxyacetone phosphate (DHAP) to sn-glycerol 3-phosphate (G3P), the key precursor for phospholipid synthesis. This Pelodictyon phaeoclathratiforme (strain DSM 5477 / BU-1) protein is Glycerol-3-phosphate dehydrogenase [NAD(P)+].